Consider the following 64-residue polypeptide: Large ribosomal subunit protein uL29 (64 aa).

The protein belongs to the universal ribosomal protein uL29 family.

This chain is Large ribosomal subunit protein uL29, found in Lacticaseibacillus paracasei (strain ATCC 334 / BCRC 17002 / CCUG 31169 / CIP 107868 / KCTC 3260 / NRRL B-441) (Lactobacillus paracasei).